Reading from the N-terminus, the 252-residue chain is Tricin synthase 1 (252 aa).

Residues S65, E87, 89-90 (GV), S95, and D113 contribute to the S-adenosyl-L-methionine site. D168 contacts a divalent metal cation. D170 provides a ligand contact to S-adenosyl-L-methionine. The a divalent metal cation site is built by D194 and N195.

Belongs to the class I-like SAM-binding methyltransferase superfamily. Cation-dependent O-methyltransferase family. CCoAMT subfamily. Requires Mg(2+) as cofactor. Mn(2+) is required as a cofactor. The cofactor is Co(2+). As to expression, ubiquitous. Highest expression in stems and roots.

It is found in the nucleus. It carries out the reaction tricetin + 2 S-adenosyl-L-methionine = 3',5'-di-O-methyltricetin + 2 S-adenosyl-L-homocysteine + 2 H(+). Catalyzes the stepwise methylation of tricetin to its 3'-mono- and 3',5'-dimethyl ethers. No 3',4',5'-trimethylated ester derivatives are produced. Can use caffeoyl-CoA, 5-hydroxyferulic acid, luteolin, tricetin, quercetin, myrcetin and 7,8-dihydroxyflavone as substrates, but not naringenin, apigenin or kaempferol. The 2,3-double bond and the O-dihydroxyl group of the substrate are both required for catalytic activity of the enzyme. In Oryza sativa subsp. japonica (Rice), this protein is Tricin synthase 1 (ROMT-15).